The chain runs to 113 residues: U11-theraphotoxin-Hhn1j (113 aa).

The signal sequence occupies residues 1–21; sequence MNTVRVTFLLVFVLAVSLGQA. Positions 22-74 are excised as a propeptide; the sequence is DKDENRMEMQEKTEQGKSYLDFAENLLLQKLEELEAKLLEEDSEESRNSRQKR. A compositionally biased stretch (basic and acidic residues) spans 60-69; sequence LEEDSEESRN. The disordered stretch occupies residues 60–83; the sequence is LEEDSEESRNSRQKRCIGEGVPCD. Cystine bridges form between cysteine 75–cysteine 90, cysteine 82–cysteine 95, and cysteine 89–cysteine 110.

The protein belongs to the neurotoxin 14 (magi-1) family. 01 (HNTX-16) subfamily. In terms of tissue distribution, expressed by the venom gland.

The protein resides in the secreted. In terms of biological role, probable ion channel inhibitor. This is U11-theraphotoxin-Hhn1j from Cyriopagopus hainanus (Chinese bird spider).